The following is a 366-amino-acid chain: 4-hydroxy-3-methylbut-2-en-1-yl diphosphate synthase (flavodoxin) (366 aa).

Residues C270, C273, C305, and E312 each coordinate [4Fe-4S] cluster.

It belongs to the IspG family. Requires [4Fe-4S] cluster as cofactor.

The catalysed reaction is (2E)-4-hydroxy-3-methylbut-2-enyl diphosphate + oxidized [flavodoxin] + H2O + 2 H(+) = 2-C-methyl-D-erythritol 2,4-cyclic diphosphate + reduced [flavodoxin]. The protein operates within isoprenoid biosynthesis; isopentenyl diphosphate biosynthesis via DXP pathway; isopentenyl diphosphate from 1-deoxy-D-xylulose 5-phosphate: step 5/6. In terms of biological role, converts 2C-methyl-D-erythritol 2,4-cyclodiphosphate (ME-2,4cPP) into 1-hydroxy-2-methyl-2-(E)-butenyl 4-diphosphate. The chain is 4-hydroxy-3-methylbut-2-en-1-yl diphosphate synthase (flavodoxin) from Acidithiobacillus ferrooxidans (strain ATCC 53993 / BNL-5-31) (Leptospirillum ferrooxidans (ATCC 53993)).